The sequence spans 127 residues: Large-conductance mechanosensitive channel (127 aa).

3 helical membrane-spanning segments follow: residues 9–29 (EFAM…GVAF), 32–52 (IVTA…LGGV), and 75–95 (VIDF…INLL).

Belongs to the MscL family. Homopentamer.

Its subcellular location is the cell inner membrane. In terms of biological role, channel that opens in response to stretch forces in the membrane lipid bilayer. May participate in the regulation of osmotic pressure changes within the cell. This is Large-conductance mechanosensitive channel from Legionella pneumophila (strain Lens).